A 275-amino-acid chain; its full sequence is ATP synthase subunit a (275 aa).

The next 7 membrane-spanning stretches (helical) occupy residues 46–66, 104–124, 135–155, 166–186, 204–224, 231–251, and 252–272; these read RLML…VIAM, FLPV…ASII, IGMP…VGIK, SIVV…IEFI, MLAG…FFFV, IFGV…LLVI, and FLQA…ALHA.

Belongs to the ATPase A chain family. As to quaternary structure, F-type ATPases have 2 components, CF(1) - the catalytic core - and CF(0) - the membrane proton channel. CF(1) has five subunits: alpha(3), beta(3), gamma(1), delta(1), epsilon(1). CF(0) has three main subunits: a(1), b(2) and c(9-12). The alpha and beta chains form an alternating ring which encloses part of the gamma chain. CF(1) is attached to CF(0) by a central stalk formed by the gamma and epsilon chains, while a peripheral stalk is formed by the delta and b chains.

It localises to the cell membrane. Functionally, key component of the proton channel; it plays a direct role in the translocation of protons across the membrane. This chain is ATP synthase subunit a, found in Rhodococcus erythropolis (strain PR4 / NBRC 100887).